The primary structure comprises 257 residues: Acetyl-coenzyme A carboxylase carboxyl transferase subunit beta (257 aa).

The region spanning 5–257 (VFTKCERCKQ…DLERLLGFVG (253 aa)) is the CoA carboxyltransferase N-terminal domain. Positions 9, 12, 28, and 31 each coordinate Zn(2+). A C4-type zinc finger spans residues 9 to 31 (CERCKQPVYEKDLRARFNVCPNC).

Belongs to the AccD/PCCB family. Acetyl-CoA carboxylase is a heterohexamer composed of biotin carboxyl carrier protein (AccB), biotin carboxylase (AccC) and two subunits each of ACCase subunit alpha (AccA) and ACCase subunit beta (AccD). The cofactor is Zn(2+).

It is found in the cytoplasm. The enzyme catalyses N(6)-carboxybiotinyl-L-lysyl-[protein] + acetyl-CoA = N(6)-biotinyl-L-lysyl-[protein] + malonyl-CoA. It participates in lipid metabolism; malonyl-CoA biosynthesis; malonyl-CoA from acetyl-CoA: step 1/1. Component of the acetyl coenzyme A carboxylase (ACC) complex. Biotin carboxylase (BC) catalyzes the carboxylation of biotin on its carrier protein (BCCP) and then the CO(2) group is transferred by the transcarboxylase to acetyl-CoA to form malonyl-CoA. In Rubrobacter xylanophilus (strain DSM 9941 / JCM 11954 / NBRC 16129 / PRD-1), this protein is Acetyl-coenzyme A carboxylase carboxyl transferase subunit beta.